The sequence spans 838 residues: DNA gyrase subunit A (838 aa).

The region spanning 41–510 (LPEVRDGLKP…ADGDVSDEDL (470 aa)) is the Topo IIA-type catalytic domain. Residue Tyr-129 is the O-(5'-phospho-DNA)-tyrosine intermediate of the active site. The GyrA-box signature appears at 537–543 (QKRGGKG).

This sequence belongs to the type II topoisomerase GyrA/ParC subunit family. As to quaternary structure, heterotetramer, composed of two GyrA and two GyrB chains. In the heterotetramer, GyrA contains the active site tyrosine that forms a transient covalent intermediate with DNA, while GyrB binds cofactors and catalyzes ATP hydrolysis.

The protein resides in the cytoplasm. It catalyses the reaction ATP-dependent breakage, passage and rejoining of double-stranded DNA.. A type II topoisomerase that negatively supercoils closed circular double-stranded (ds) DNA in an ATP-dependent manner to modulate DNA topology and maintain chromosomes in an underwound state. Negative supercoiling favors strand separation, and DNA replication, transcription, recombination and repair, all of which involve strand separation. Also able to catalyze the interconversion of other topological isomers of dsDNA rings, including catenanes and knotted rings. Type II topoisomerases break and join 2 DNA strands simultaneously in an ATP-dependent manner. The protein is DNA gyrase subunit A of Mycobacterium tuberculosis (strain CDC 1551 / Oshkosh).